A 261-amino-acid polypeptide reads, in one-letter code: 4-hydroxy-tetrahydrodipicolinate reductase (261 aa).

Residues 11–16 (GFMGAM), 96–98 (GTT), and 122–125 (APNF) contribute to the NAD(+) site. The active-site Proton donor/acceptor is the histidine 152. Histidine 153 serves as a coordination point for (S)-2,3,4,5-tetrahydrodipicolinate. Lysine 156 (proton donor) is an active-site residue. Residue 162-163 (GT) participates in (S)-2,3,4,5-tetrahydrodipicolinate binding.

It belongs to the DapB family.

The protein localises to the cytoplasm. The catalysed reaction is (S)-2,3,4,5-tetrahydrodipicolinate + NAD(+) + H2O = (2S,4S)-4-hydroxy-2,3,4,5-tetrahydrodipicolinate + NADH + H(+). It carries out the reaction (S)-2,3,4,5-tetrahydrodipicolinate + NADP(+) + H2O = (2S,4S)-4-hydroxy-2,3,4,5-tetrahydrodipicolinate + NADPH + H(+). It participates in amino-acid biosynthesis; L-lysine biosynthesis via DAP pathway; (S)-tetrahydrodipicolinate from L-aspartate: step 4/4. Its function is as follows. Catalyzes the conversion of 4-hydroxy-tetrahydrodipicolinate (HTPA) to tetrahydrodipicolinate. This Lactobacillus helveticus (strain DPC 4571) protein is 4-hydroxy-tetrahydrodipicolinate reductase.